A 371-amino-acid chain; its full sequence is Bifunctional enzyme IspD/IspF (371 aa).

Positions 1–210 (MLDISLIMLS…LNLPKPSWDI (210 aa)) are 2-C-methyl-D-erythritol 4-phosphate cytidylyltransferase. Positions 211–371 (FNGNGFDVHE…NLKYFDWMKL (161 aa)) are 2-C-methyl-D-erythritol 2,4-cyclodiphosphate synthase. Asp217 and His219 together coordinate a divalent metal cation. 4-CDP-2-C-methyl-D-erythritol 2-phosphate is bound by residues 217–219 (DVH) and 243–244 (HS). A divalent metal cation is bound at residue His251. 4-CDP-2-C-methyl-D-erythritol 2-phosphate is bound by residues 265-267 (DIG), 270-274 (FPDND), 341-344 (TTTE), Phe348, and Arg351.

The protein in the N-terminal section; belongs to the IspD/TarI cytidylyltransferase family. IspD subfamily. This sequence in the C-terminal section; belongs to the IspF family. A divalent metal cation serves as cofactor.

It catalyses the reaction 2-C-methyl-D-erythritol 4-phosphate + CTP + H(+) = 4-CDP-2-C-methyl-D-erythritol + diphosphate. The enzyme catalyses 4-CDP-2-C-methyl-D-erythritol 2-phosphate = 2-C-methyl-D-erythritol 2,4-cyclic diphosphate + CMP. It functions in the pathway isoprenoid biosynthesis; isopentenyl diphosphate biosynthesis via DXP pathway; isopentenyl diphosphate from 1-deoxy-D-xylulose 5-phosphate: step 2/6. The protein operates within isoprenoid biosynthesis; isopentenyl diphosphate biosynthesis via DXP pathway; isopentenyl diphosphate from 1-deoxy-D-xylulose 5-phosphate: step 4/6. In terms of biological role, bifunctional enzyme that catalyzes the formation of 4-diphosphocytidyl-2-C-methyl-D-erythritol from CTP and 2-C-methyl-D-erythritol 4-phosphate (MEP) (IspD), and catalyzes the conversion of 4-diphosphocytidyl-2-C-methyl-D-erythritol 2-phosphate (CDP-ME2P) to 2-C-methyl-D-erythritol 2,4-cyclodiphosphate (ME-CPP) with a corresponding release of cytidine 5-monophosphate (CMP) (IspF). This Campylobacter lari (strain RM2100 / D67 / ATCC BAA-1060) protein is Bifunctional enzyme IspD/IspF.